The primary structure comprises 660 residues: MSAIESVMQEHRVFNPPASFAKTAAIPSMEAYQALCDEAAKDYEGFWARHARELLHWHKPFTKVLDESNAPFYKWFEDGEINASYNCLDRNVEKGLGDKTAIVFEADDGTVTRVSYQELLAKVSRFANGMKALGIKKGDRVVIYMPMSVEGVVAMQACARIGATHSVVFGGFSAKSLQERLVDVGAVALITADEQMRGGKALPLKAIADEALTLGGCEAVKNVIVYRRTGGNVAWTEGRDRSMEDVAAGQSDNCPAEPVGAEHPLFVLYTSGSTGKPKGVQHSTGGYLLWALMTMRWTFDIKPDDMFWCTADIGWVTGHTYITYGPLAAGATQIVFEGVPTFPNAGRFWDMIQRHKVSIFYTAPTAIRSLIKAAEADEKIHPKQYDLSSLRLLGTVGEPINPEAWMWYYKNIGRERCPIVDTFWQTETGGHMITPLPGATPLVPGSCTLPLPGIMAAIVDETGQDVPNGNGGILVVKRPWPSMIRTIWGDPERFKKSYYPEELGGKLYLAGDGSIRDKETGYFTIMGRIDDVLNVSGHRMGTMEIESALVSNPIVAEAAVVGRPDDTTGEAICAFVVLKRSRPTAEEAVKIAAELRNWVGKEIGPIAKPKDIRFGDNLPKTRSGKIMRRLLRSLAKGEDITQDTSTLENPAILDQLKQAQ.

CoA-binding positions include 197–200 and threonine 317; that span reads RGGK. ATP is bound by residues 397-399, 421-426, aspartate 512, and arginine 528; these read GEP and DTFWQT. Residue serine 536 coordinates CoA. Arginine 539 lines the ATP pocket. The Mg(2+) site is built by valine 550 and valine 555. Residue lysine 625 is modified to N6-acetyllysine.

The protein belongs to the ATP-dependent AMP-binding enzyme family. The cofactor is Mg(2+). In terms of processing, acetylated. Deacetylation by the SIR2-homolog deacetylase activates the enzyme.

It catalyses the reaction acetate + ATP + CoA = acetyl-CoA + AMP + diphosphate. Its function is as follows. Catalyzes the conversion of acetate into acetyl-CoA (AcCoA), an essential intermediate at the junction of anabolic and catabolic pathways. AcsA undergoes a two-step reaction. In the first half reaction, AcsA combines acetate with ATP to form acetyl-adenylate (AcAMP) intermediate. In the second half reaction, it can then transfer the acetyl group from AcAMP to the sulfhydryl group of CoA, forming the product AcCoA. In Cupriavidus metallidurans (strain ATCC 43123 / DSM 2839 / NBRC 102507 / CH34) (Ralstonia metallidurans), this protein is Acetyl-coenzyme A synthetase.